We begin with the raw amino-acid sequence, 361 residues long: Phospho-N-acetylmuramoyl-pentapeptide-transferase (361 aa).

The next 10 membrane-spanning stretches (helical) occupy residues 17–37 (SIYLRAFLGFVISFCIVLFAG), 66–86 (GTPTMGGVLIIAAVLLTSIFI), 90–110 (TNSLILLVLLSTIMFAAIGFI), 129–149 (LLFQGAIGLIIWAYIYFIGLT), 162–182 (ISAYPYYIGAIGLFFLIQIVL), 197–217 (GLAIMPMIICSTILGVIAYFT), 232–252 (VGSGELSVFLSAVTGAGLGFL), 261–281 (IFMGDTGSLTLGGILGVIAII), 286–306 (LMLPIMGFIFVLEALSVILQV), and 340–360 (FWIGTLIFGIIALGAIKMRGI).

It belongs to the glycosyltransferase 4 family. MraY subfamily. Requires Mg(2+) as cofactor.

It localises to the cell inner membrane. It carries out the reaction UDP-N-acetyl-alpha-D-muramoyl-L-alanyl-gamma-D-glutamyl-meso-2,6-diaminopimeloyl-D-alanyl-D-alanine + di-trans,octa-cis-undecaprenyl phosphate = di-trans,octa-cis-undecaprenyl diphospho-N-acetyl-alpha-D-muramoyl-L-alanyl-D-glutamyl-meso-2,6-diaminopimeloyl-D-alanyl-D-alanine + UMP. It functions in the pathway cell wall biogenesis; peptidoglycan biosynthesis. Its function is as follows. Catalyzes the initial step of the lipid cycle reactions in the biosynthesis of the cell wall peptidoglycan: transfers peptidoglycan precursor phospho-MurNAc-pentapeptide from UDP-MurNAc-pentapeptide onto the lipid carrier undecaprenyl phosphate, yielding undecaprenyl-pyrophosphoryl-MurNAc-pentapeptide, known as lipid I. The protein is Phospho-N-acetylmuramoyl-pentapeptide-transferase of Fusobacterium nucleatum subsp. nucleatum (strain ATCC 25586 / DSM 15643 / BCRC 10681 / CIP 101130 / JCM 8532 / KCTC 2640 / LMG 13131 / VPI 4355).